A 398-amino-acid chain; its full sequence is S-adenosylmethionine synthase (398 aa).

Residue histidine 16 coordinates ATP. Mg(2+) is bound at residue aspartate 18. K(+) is bound at residue glutamate 44. 2 residues coordinate L-methionine: glutamate 57 and glutamine 100. Residues 100–110 (QSPDIAQGVNE) form a flexible loop region. ATP-binding positions include 175-177 (DAK), 242-243 (RF), aspartate 251, 257-258 (RK), alanine 274, and lysine 278. Residue aspartate 251 coordinates L-methionine. An L-methionine-binding site is contributed by lysine 282.

It belongs to the AdoMet synthase family. Homotetramer; dimer of dimers. It depends on Mg(2+) as a cofactor. The cofactor is K(+).

The protein resides in the cytoplasm. The enzyme catalyses L-methionine + ATP + H2O = S-adenosyl-L-methionine + phosphate + diphosphate. It participates in amino-acid biosynthesis; S-adenosyl-L-methionine biosynthesis; S-adenosyl-L-methionine from L-methionine: step 1/1. Its function is as follows. Catalyzes the formation of S-adenosylmethionine (AdoMet) from methionine and ATP. The overall synthetic reaction is composed of two sequential steps, AdoMet formation and the subsequent tripolyphosphate hydrolysis which occurs prior to release of AdoMet from the enzyme. The chain is S-adenosylmethionine synthase from Streptococcus agalactiae serotype Ia (strain ATCC 27591 / A909 / CDC SS700).